Here is a 410-residue protein sequence, read N- to C-terminus: O-methyltransferase afvC (410 aa).

S-adenosyl-L-methionine is bound by residues 253–254 (GG), aspartate 278, 299–300 (DF), and arginine 315. Catalysis depends on histidine 319, which acts as the Proton acceptor.

Belongs to the class I-like SAM-binding methyltransferase superfamily. Cation-independent O-methyltransferase family. COMT subfamily.

It functions in the pathway secondary metabolite biosynthesis. O-methyltransferase; part of the gene cluster that mediates the biosynthesis of aflavarin, a bicoumarin that exhibits anti-insectan activity against the fungivorous beetle C.hemipterus. In Aspergillus flavus (strain ATCC 200026 / FGSC A1120 / IAM 13836 / NRRL 3357 / JCM 12722 / SRRC 167), this protein is O-methyltransferase afvC.